Reading from the N-terminus, the 707-residue chain is Golgin candidate 1 (707 aa).

Topologically, residues 1 to 664 (MASWLKAAED…RATRFLWRYP (664 aa)) are cytoplasmic. 3 disordered regions span residues 22–106 (VVED…EIHP), 121–196 (VADT…SKRD), and 234–256 (QEPK…ADTT). Residues 38–47 (SGRKGSQGKR) are compositionally biased toward low complexity. The segment covering 56–67 (VKEESSNKRDSS) has biased composition (basic and acidic residues). The segment covering 68 to 80 (GDQSGPGVSQSEV) has biased composition (polar residues). The segment covering 83 to 95 (SKSSVSTDETSSS) has biased composition (low complexity). Composition is skewed to basic and acidic residues over residues 139–150 (DGDRSESKHADG), 185–196 (TQRELDDSSKRD), and 245–254 (LKREQDRRAD). 2 coiled-coil regions span residues 287-424 (RVCA…NATK) and 452-608 (ADER…KSRV). Residues 665-685 (IARMFLLFYLVFVHLFLMYLI) form a helical; Signal-anchor for type II membrane protein membrane-spanning segment. The Lumenal segment spans residues 686 to 707 (HRLQEQAEAQEVAAMTNNVFRL).

Its subcellular location is the golgi apparatus membrane. In terms of biological role, golgi matrix protein playing a role in tethering of vesicles to Golgi membranes and in maintaining the overall structure of the Golgi apparatus. The polypeptide is Golgin candidate 1 (GC1) (Arabidopsis thaliana (Mouse-ear cress)).